A 231-amino-acid chain; its full sequence is MMIFRFVTTLAASLPLLTFAAPISFSHAKNEAVKIYRDHPVSFYCGCEIRWQGKKGIPDLESCGYQVRKNENRASRIEWEHVVPAWQFGHQLQCWQQGGRKNCTRTSPEFNQMEADLHNLTPAIGEVNGDRSNFSFSQWNGVDGVTYGQCEMQVNFKERTAMPPERARGAIARTYLYMSEQYGLRLSKAQSQLMQAWNNQYPVSEWECVRDQRIEKVQGNSNRFVREQCPN.

Residues 1 to 20 (MMIFRFVTTLAASLPLLTFA) form the signal peptide.

It belongs to the EndA/NucM nuclease family.

It localises to the secreted. This Vibrio cholerae serotype O1 (strain ATCC 39315 / El Tor Inaba N16961) protein is Extracellular deoxyribonuclease (dns).